Consider the following 459-residue polypeptide: WPP domain-interacting protein 3 (459 aa).

Polar residues predominate over residues 1–17 (MNESVPDSVEDNGNSVP). The tract at residues 1–78 (MNESVPDSVE…GPVRDEAAPV (78 aa)) is disordered. A compositionally biased stretch (basic residues) spans 52-66 (STRKGFGLKKWRRIK). Short sequence motifs (nuclear localization signal) lie at residues 60-61 (KK) and 63-64 (RR). Residues 67–78 (RDGPVRDEAAPV) show a composition bias toward basic and acidic residues. A Nuclear localization signal 3 motif is present at residues 86–87 (KR). Disordered regions lie at residues 240–266 (KEEV…NNNH) and 308–330 (TDEL…TSSG). Positions 251-266 (NGNKEDDGESKKNNNH) are enriched in basic and acidic residues. The segment covering 308 to 319 (TDELSSDQPSHQ) has biased composition (polar residues). A coiled-coil region spans residues 331 to 375 (SKALILKEKVKLLEHKLEEARAALEAKEARIQELENSKIESELEC). Residues 426-459 (KLGFYILTQLILLVSILRFLVLQFSPASRLVIPT) enclose the KASH domain. Residues 427 to 447 (LGFYILTQLILLVSILRFLVL) form a helical membrane-spanning segment.

Component of Ran complexes at least composed of WIT1 or WIT2, RANGAP1 or RANGAP2, and WIP1 or WIP2 or WIP3. Interacts with RANGAP1, WPP1/MAF1, and WPP2/MAF2. Interacts with SUN1 and SUN2. Core component of the LINC complex which is composed of inner nuclear membrane SUN domain-containing proteins coupled to outer nuclear membrane WIP and WIT proteins. The LINC complex also involves nucleoskeletal proteins CRWN/LINC and possibly KAKU4 and the cytoskeletal myosin KAKU1. Interacts with WIT2. Expressed in seedlings, roots, stems, leaves, and flowers.

The protein localises to the nucleus envelope. The protein resides in the nucleus membrane. In terms of biological role, mediates and enhances the nuclear envelope docking of RANGAP proteins mediated by WIT1 and WIT2 in the undifferentiated cells of root tips. As component of the SUN-WIP-WIT2-KAKU1 complex, mediates the transfer of cytoplasmic forces to the nuclear envelope (NE), leading to nuclear shape changes. In Arabidopsis thaliana (Mouse-ear cress), this protein is WPP domain-interacting protein 3 (WIP3).